The sequence spans 93 residues: UPF0367 protein gsr3177 (93 aa).

The protein belongs to the UPF0367 family.

The polypeptide is UPF0367 protein gsr3177 (Gloeobacter violaceus (strain ATCC 29082 / PCC 7421)).